The primary structure comprises 352 residues: Uroporphyrinogen decarboxylase (352 aa).

Residues 27–31 (RQAGR), Asp-77, Tyr-154, Thr-209, and His-325 each bind substrate.

It belongs to the uroporphyrinogen decarboxylase family. As to quaternary structure, homodimer.

It localises to the cytoplasm. The catalysed reaction is uroporphyrinogen III + 4 H(+) = coproporphyrinogen III + 4 CO2. Its pathway is porphyrin-containing compound metabolism; protoporphyrin-IX biosynthesis; coproporphyrinogen-III from 5-aminolevulinate: step 4/4. Functionally, catalyzes the decarboxylation of four acetate groups of uroporphyrinogen-III to yield coproporphyrinogen-III. The sequence is that of Uroporphyrinogen decarboxylase from Legionella pneumophila subsp. pneumophila (strain Philadelphia 1 / ATCC 33152 / DSM 7513).